We begin with the raw amino-acid sequence, 494 residues long: tRNA (guanine(37)-N(1))-methyltransferase (494 aa).

A mitochondrion-targeting transit peptide spans 1–32 (MRIRRILYFYGNLPNTYTANVLRRLAFSCWHT). Residues H278, 316-317 (DL), 344-345 (DG), and N377 contribute to the S-adenosyl-L-methionine site. Positions 468-494 (DTGEPESKRPRTAEAFPLPHVQQSRNS) are disordered.

Belongs to the class I-like SAM-binding methyltransferase superfamily. TRM5/TYW2 family. In terms of assembly, monomer.

The protein localises to the mitochondrion matrix. The protein resides in the nucleus. Its subcellular location is the cytoplasm. It catalyses the reaction guanosine(37) in tRNA + S-adenosyl-L-methionine = N(1)-methylguanosine(37) in tRNA + S-adenosyl-L-homocysteine + H(+). Involved in mitochondrial tRNA methylation. Specifically methylates the N1 position of guanosine-37 in various tRNAs. Methylation is not dependent on the nature of the nucleoside 5' of the target nucleoside. This is the first step in the biosynthesis of wybutosine (yW), a modified base adjacent to the anticodon of tRNAs and required for accurate decoding. This is tRNA (guanine(37)-N(1))-methyltransferase (trmt5) from Xenopus tropicalis (Western clawed frog).